The chain runs to 108 residues: Large ribosomal subunit protein uL24 (108 aa).

It belongs to the universal ribosomal protein uL24 family. As to quaternary structure, part of the 50S ribosomal subunit.

Its function is as follows. One of two assembly initiator proteins, it binds directly to the 5'-end of the 23S rRNA, where it nucleates assembly of the 50S subunit. In terms of biological role, one of the proteins that surrounds the polypeptide exit tunnel on the outside of the subunit. In Moorella thermoacetica (strain ATCC 39073 / JCM 9320), this protein is Large ribosomal subunit protein uL24.